A 495-amino-acid chain; its full sequence is Heat stress transcription factor A-1a (495 aa).

A DNA-binding region spans residues 50–144 (PPPFLSKTYD…LLKKISRRKS (95 aa)). A disordered region spans residues 140 to 164 (SRRKSVQGHGSSSSNPQSQQLSQGQ). A compositionally biased stretch (low complexity) spans 146–164 (QGHGSSSSNPQSQQLSQGQ). The hydrophobic repeat HR-A/B stretch occupies residues 172–238 (SCVEVGKFGL…QIMSFLAKAV (67 aa)). The disordered stretch occupies residues 255-288 (NMHVTEANKKRRLREDSTAATESNSHSHSLEASD). A Nuclear localization signal motif is present at residues 262–268 (NKKRRLR). Polar residues predominate over residues 272–281 (TAATESNSHS). An AHA motif is present at residues 433–442 (FEFLEEYMPE). Positions 445–477 (VFGDATTLENNNNNNNNNNNNNNNNNNNNTNGR) are disordered. Residues 454–473 (NNNNNNNNNNNNNNNNNNNN) are compositionally biased toward low complexity. A Nuclear export signal motif is present at residues 482–489 (LIEELGLL).

Belongs to the HSF family. Class A subfamily. Homotrimer. Interacts with HSP70-1 and HSP70-4. Binds to CRK1. Binds to HSBP. Exhibits temperature-dependent phosphorylation. Phosphorylated by CRK1. As to expression, constitutively expressed.

The protein resides in the cytoplasm. It is found in the nucleus. In terms of biological role, transcriptional activator that specifically binds DNA sequence 5'-AGAAnnTTCT-3' known as heat shock promoter elements (HSE). This chain is Heat stress transcription factor A-1a (HSFA1A), found in Arabidopsis thaliana (Mouse-ear cress).